The sequence spans 403 residues: 1-deoxy-D-xylulose 5-phosphate reductoisomerase (403 aa).

NADPH is bound by residues Thr18, Gly19, Ser20, Ile21, Gln46, and Asn132. A 1-deoxy-D-xylulose 5-phosphate-binding site is contributed by Lys133. Residue Glu134 coordinates NADPH. Asp158 provides a ligand contact to Mn(2+). 1-deoxy-D-xylulose 5-phosphate contacts are provided by Ser159, Glu160, Ser189, and His212. Position 160 (Glu160) interacts with Mn(2+). Residue Gly218 coordinates NADPH. Positions 225, 230, 231, and 234 each coordinate 1-deoxy-D-xylulose 5-phosphate. Residue Glu234 coordinates Mn(2+).

This sequence belongs to the DXR family. Mg(2+) serves as cofactor. The cofactor is Mn(2+).

The enzyme catalyses 2-C-methyl-D-erythritol 4-phosphate + NADP(+) = 1-deoxy-D-xylulose 5-phosphate + NADPH + H(+). It functions in the pathway isoprenoid biosynthesis; isopentenyl diphosphate biosynthesis via DXP pathway; isopentenyl diphosphate from 1-deoxy-D-xylulose 5-phosphate: step 1/6. In terms of biological role, catalyzes the NADPH-dependent rearrangement and reduction of 1-deoxy-D-xylulose-5-phosphate (DXP) to 2-C-methyl-D-erythritol 4-phosphate (MEP). In Aromatoleum aromaticum (strain DSM 19018 / LMG 30748 / EbN1) (Azoarcus sp. (strain EbN1)), this protein is 1-deoxy-D-xylulose 5-phosphate reductoisomerase.